The sequence spans 178 residues: Cytochrome b6-f complex iron-sulfur subunit (178 aa).

A helical transmembrane segment spans residues 20–42 (LLTFGTATGVALGALYPVANYFM). In terms of domain architecture, Rieske spans 65–161 (KTGWLANHQA…VDVDDDAVLV (97 aa)). Positions 107, 109, 125, and 128 each coordinate [2Fe-2S] cluster. A disulfide bridge connects residues Cys112 and Cys127.

Belongs to the Rieske iron-sulfur protein family. As to quaternary structure, the 4 large subunits of the cytochrome b6-f complex are cytochrome b6, subunit IV (17 kDa polypeptide, PetD), cytochrome f and the Rieske protein, while the 4 small subunits are PetG, PetL, PetM and PetN. The complex functions as a dimer. Requires [2Fe-2S] cluster as cofactor.

Its subcellular location is the cellular thylakoid membrane. It carries out the reaction 2 oxidized [plastocyanin] + a plastoquinol + 2 H(+)(in) = 2 reduced [plastocyanin] + a plastoquinone + 4 H(+)(out). Component of the cytochrome b6-f complex, which mediates electron transfer between photosystem II (PSII) and photosystem I (PSI), cyclic electron flow around PSI, and state transitions. The chain is Cytochrome b6-f complex iron-sulfur subunit from Prochlorococcus marinus (strain MIT 9515).